A 208-amino-acid chain; its full sequence is Translation initiation factor 2 subunit beta (208 aa).

The TRAM domain occupies 144–202 (GIEEGKEYTVEISEVGSSGEGRASFRGFTIFVPGTKKGETVKVKIKKIKNDVAIAEVVS).

It belongs to the eIF-2-beta/eIF-5 family. As to quaternary structure, heterotrimer composed of an alpha, a beta and a gamma chain.

Its function is as follows. eIF-2 functions in the early steps of protein synthesis by forming a ternary complex with GTP and initiator tRNA. The chain is Translation initiation factor 2 subunit beta (eif2b) from Thermoplasma volcanium (strain ATCC 51530 / DSM 4299 / JCM 9571 / NBRC 15438 / GSS1).